We begin with the raw amino-acid sequence, 467 residues long: MQYYKELARRLHTLQSKNEKEALEKQIDFLDKLVVEVDSLVHEQDLRPLLEFISPTESWFLLGTATIFYIKLLTHPDPESIDVVIKEAYVVRAHRILSIFQEQFIENVVKEINWEILAILISLSGIENGLVRNLSEFLSTSILSAVPRQKFLLYLLEKYQINLFHREERLTDQGRPVAFELPPDKFHSDQSKALLEPKWKTKNYLISHLIFWIIDQQSSSSIEVCWHRIIPSVLRILNDLSPNIKLQGIELVNRLLKITEREFLLYTGILKILKDDLLVFYTFIPPRFTIQTSVTLINASFATLVSLYPEENENLNSIMLNGINSVFQFAFDYPLILQAAFSQIMVLTDKMNVSYLPYLTLTLDELCRIIQNPQIIQIPSTLSFFLEILTKLLEIYSYRISAHHVELLMALVVCSRNYMRCNLQEHHNAIVQALQNLFTLIKLNITVEQLGDYNVILPLLEPLQIPL.

A coiled-coil region spans residues 4–45; the sequence is YKELARRLHTLQSKNEKEALEKQIDFLDKLVVEVDSLVHEQD.

Belongs to the TTI2 family. Component of the TTT complex composed of tel2, tti1 and tti2. Interacts with tel2 and ttiI1. Component of the ASTRA complex composed of at least rvb1, rvb2, tra1, tel2, tti1 and tti2.

It is found in the nucleus. Functionally, component of the tel2-tti1-tti2 (TTT) complex that stabilizes protein levels of the phosphatidylinositol 3-kinase-related protein kinase (PIKK) family proteins. The TTT complex is involved in the cellular resistance to DNA damage stresses, like ionizing radiation (IR), ultraviolet (UV) and mitomycin C (MMC). Component of the ASTRA complex involved in chromatin remodeling. In Schizosaccharomyces pombe (strain 972 / ATCC 24843) (Fission yeast), this protein is Tel2-interacting protein 2.